Here is a 441-residue protein sequence, read N- to C-terminus: Importin subunit alpha-8 (441 aa).

8 ARM repeats span residues 39–79 (QRDI…NIAV), 80–118 (DNPGVVVNNNAVPVLIQLIASPKDYVREQAIWTLSNVAG), 121–158 (IHYRDFVLNSGVLMPLLRLLYKDTTLRIATWALRNLCR), 160–199 (KPHPAFDQVKPALPALEILLHSHDEDVLKNACMALCHLSE), 202–241 (EDGIQSVIEAGFVPKLVQILQLPSPVVLVPALLTIGAMTA), 244–284 (HQQT…NITA), 287–326 (KEQIQSVIDANLIPILVNLAQDTDFYMKKEAVWAISNMAL), and 330–370 (HDQI…NMLK).

Belongs to the importin alpha family. Forms a complex with importin subunit beta-1.

Its subcellular location is the nucleus envelope. Its function is as follows. Binds to conventional NLS motifs and mediates nuclear protein import across the nuclear envelope. This Arabidopsis thaliana (Mouse-ear cress) protein is Importin subunit alpha-8.